We begin with the raw amino-acid sequence, 545 residues long: Beta-sesquiphellandrene synthase (545 aa).

Mg(2+)-binding residues include Asp299, Asp303, Asn443, Ser447, and Glu451. The DDXXD motif motif lies at 299–303; that stretch reads DDIMD.

Belongs to the terpene synthase family. Mg(2+) is required as a cofactor. The cofactor is Mn(2+).

It is found in the cytoplasm. The catalysed reaction is (2E,6E)-farnesyl diphosphate = beta-sesquiphellandrene + diphosphate. Its pathway is secondary metabolite biosynthesis; terpenoid biosynthesis. In terms of biological role, sesquiterpene synthase converting farnesyl diphosphate into beta-sesquiphellandrene and six minor products, zingiberene, 7-epi-sesquithujene, sesquisabinene A, (E)-alpha-bergamotene, (E)-beta-farnesene and beta-bisabolene. Can also accept geranyl diphosphate as substrate, producing nine monoterpenes, with myrcene and limonene as the major products. The protein is Beta-sesquiphellandrene synthase (TPS2) of Sorghum bicolor (Sorghum).